The sequence spans 201 residues: 3-isopropylmalate dehydratase small subunit (201 aa).

It belongs to the LeuD family. LeuD type 1 subfamily. As to quaternary structure, heterodimer of LeuC and LeuD.

It carries out the reaction (2R,3S)-3-isopropylmalate = (2S)-2-isopropylmalate. The protein operates within amino-acid biosynthesis; L-leucine biosynthesis; L-leucine from 3-methyl-2-oxobutanoate: step 2/4. Catalyzes the isomerization between 2-isopropylmalate and 3-isopropylmalate, via the formation of 2-isopropylmaleate. In Ruegeria sp. (strain TM1040) (Silicibacter sp.), this protein is 3-isopropylmalate dehydratase small subunit.